The following is a 306-amino-acid chain: MNQHFHRGILFYHQAAGQGNLYKSLGQVTESLTQMCDDLTLKLSEEGGDIAKFCDDLTQNQNGVSYDVFFVLGGDGTVNELVNGVARNNLEIPIGIIPGGTFNDFTKTLNLSPRTAAAANELLNSKIKSFDVLKVNDTYALNFAGIGMMVQNSENVDANKKRILGKFSYVFTTLKVIANPKIYQYTIKANNEEYSGETSMILIANGNYVGGSKIPLEDLSPSDGEMNIFVFKNHNMSLIKDFFQVKDSLRWNDITENIRLITTDEMKLETRPSTKIDIDGEIMFDTPVDIKLLKDKVKLLYIDVNE.

The DAGKc domain maps to 3–139 (QHFHRGILFY…FDVLKVNDTY (137 aa)). ATP is bound by residues serine 44, 74 to 80 (GDGTVNE), and threonine 101. Residues serine 220, aspartate 223, and glutamate 225 each coordinate Mg(2+). The Proton acceptor role is filled by glutamate 281.

This sequence belongs to the diacylglycerol/lipid kinase family. Mg(2+) is required as a cofactor.

May catalyze the ATP-dependent phosphorylation of lipids other than diacylglycerol (DAG). The chain is Putative lipid kinase Sca_1050 from Staphylococcus carnosus (strain TM300).